Here is a 207-residue protein sequence, read N- to C-terminus: Proteasome subunit beta 1 (207 aa).

A propeptide spans 1–9 (MWALDKIKG) (removed in mature form; by autocatalysis). Threonine 10 (nucleophile) is an active-site residue.

The protein belongs to the peptidase T1B family. In terms of assembly, the 20S proteasome core is composed of 14 alpha and 14 beta subunits that assemble into four stacked heptameric rings, resulting in a barrel-shaped structure. The two inner rings, each composed of seven catalytic beta subunits, are sandwiched by two outer rings, each composed of seven alpha subunits. The catalytic chamber with the active sites is on the inside of the barrel. Has a gated structure, the ends of the cylinder being occluded by the N-termini of the alpha-subunits. Is capped at one or both ends by the proteasome regulatory ATPase, PAN.

It localises to the cytoplasm. The catalysed reaction is Cleavage of peptide bonds with very broad specificity.. With respect to regulation, the formation of the proteasomal ATPase PAN-20S proteasome complex, via the docking of the C-termini of PAN into the intersubunit pockets in the alpha-rings, triggers opening of the gate for substrate entry. Interconversion between the open-gate and close-gate conformations leads to a dynamic regulation of the 20S proteasome proteolysis activity. Functionally, component of the proteasome core, a large protease complex with broad specificity involved in protein degradation. This chain is Proteasome subunit beta 1, found in Thermococcus sibiricus (strain DSM 12597 / MM 739).